Here is a 95-residue protein sequence, read N- to C-terminus: MASANALGMIETKGLVGAIEAADAMVKAANVQLVGKEQVGGGLVTVMVRGDVGAVKAATDAGAAAAERVGELISVHVIPRPHFEVDAILPKVSAE.

One can recognise a BMC domain in the interval 6 to 90 (ALGMIETKGL…PHFEVDAILP (85 aa)).

It belongs to the bacterial microcompartments protein family. In terms of assembly, homohexamer; has a positively charged pore 9 Angstroms in diameter. The hexamers pack into a two-dimensional array. May interact with EutQ.

The protein localises to the bacterial microcompartment. It participates in amine and polyamine degradation; ethanolamine degradation. Functionally, a component of the bacterial microcompartment (BMC) shell dedicated to ethanolamine degradation. Each homohexamer has a central pore with an opening of up to 9.0 Angstroms. Expression of the eut operon may allow this bacteria to use ethanolamine as a carbon, nitrogen and energy source. The pore probably allows metabolite passage into and out of the BMC. The protein is Bacterial microcompartment shell protein EutM of Clostridioides difficile (strain 630) (Peptoclostridium difficile).